A 368-amino-acid chain; its full sequence is Chaperone protein DnaJ (368 aa).

Residues 5–70 form the J domain; sequence DYYQVLGVPR…KKRKLYDTHG (66 aa). The segment at 124–201 adopts a CR-type zinc-finger fold; that stretch reads GVERQIQIPT…CNGAGRVEDH (78 aa). Residues Cys137, Cys140, Cys153, Cys156, Cys175, Cys178, Cys189, and Cys192 each coordinate Zn(2+). CXXCXGXG motif repeat units follow at residues 137–144, 153–160, 175–182, and 189–196; these read CTHCHGSG, CGTCRGSG, CPHCGGRG, and CKVCNGAG.

This sequence belongs to the DnaJ family. In terms of assembly, homodimer. Zn(2+) is required as a cofactor.

The protein resides in the cytoplasm. Its function is as follows. Participates actively in the response to hyperosmotic and heat shock by preventing the aggregation of stress-denatured proteins and by disaggregating proteins, also in an autonomous, DnaK-independent fashion. Unfolded proteins bind initially to DnaJ; upon interaction with the DnaJ-bound protein, DnaK hydrolyzes its bound ATP, resulting in the formation of a stable complex. GrpE releases ADP from DnaK; ATP binding to DnaK triggers the release of the substrate protein, thus completing the reaction cycle. Several rounds of ATP-dependent interactions between DnaJ, DnaK and GrpE are required for fully efficient folding. Also involved, together with DnaK and GrpE, in the DNA replication of plasmids through activation of initiation proteins. This Xylella fastidiosa (strain 9a5c) protein is Chaperone protein DnaJ.